The primary structure comprises 93 residues: MTEEHVVYIGKKPVMNYVLAVITQFHEGAKEVSIKARGRAISRAVDVAEIVRNRFLKDDVDVKEIKIGTEELPTADGRTTNTSTIEIVLARKT.

Position 11 is an N6-acetyllysine (Lys11).

This sequence belongs to the histone-like Alba family. Post-translationally, acetylated. Acetylation at Lys-11 decreases DNA-binding affinity.

The protein resides in the cytoplasm. It is found in the chromosome. Functionally, binds double-stranded DNA tightly but without sequence specificity. Involved in DNA compaction. This chain is DNA/RNA-binding protein Alba, found in Pyrococcus horikoshii (strain ATCC 700860 / DSM 12428 / JCM 9974 / NBRC 100139 / OT-3).